Consider the following 237-residue polypeptide: Uridylate kinase (237 aa).

ATP is bound at residue K12–G15. The tract at residues G20–G25 is involved in allosteric activation by GTP. Residue G54 coordinates UMP. The ATP site is built by G55 and R59. UMP-binding positions include D74 and T135–T142. ATP contacts are provided by T162, Y168, and D171.

This sequence belongs to the UMP kinase family. Homohexamer.

The protein localises to the cytoplasm. It carries out the reaction UMP + ATP = UDP + ADP. It participates in pyrimidine metabolism; CTP biosynthesis via de novo pathway; UDP from UMP (UMPK route): step 1/1. With respect to regulation, allosterically activated by GTP. Inhibited by UTP. Catalyzes the reversible phosphorylation of UMP to UDP. The polypeptide is Uridylate kinase (Haemophilus influenzae (strain PittEE)).